Here is an 884-residue protein sequence, read N- to C-terminus: MAQPYMKKDDDDEDVEYSPFYGIEKGAVLQEARAFHDPQLDARKCSQVITKLLYLLNQGETFTKVEATEVFFAVTKLFQSKDAGLRRLVYLMIKELSPSSDEVIIVTSSLMKDMNSKTDMYRANAIRVLCRIIDGTLLTQIERYLKQAIVDKNPVVASAALVSGIHLLQANPEIVKRWSNEVQEAVQSRFALVQFHGLALLHQIRQNDRLAISKMVSGLTRGSVRSPLAQCLLIRYTSQVIRESSMNTQTSDRPFFDYLESCLRHKSEMVILEAARKIAEMDVTSRELAPAITVLQLFLSSSKPVLRFAAVRTLNKVAMTRPLAVTNCNVDLESLMSDQNRSIATLAITTLLKTGNESSVDRLMKQITNFMSDIADEFKIVVVEAIRSLCLKFPLKYRSMMNFLSNSLREEGGFEYKKAIVDSIVTLISEIPDAKEIGLLYLCEFIEDCEFTYLSSQILHLLGNEGPRTSDPSRYIRYIYNRVILENATVRASAVSTLAKFGALVDALKPRIFVLLRRCLFDTDDEVRDRATLYLQTLDGEVAVGSTEKDVKEFLFGSFDVPLANLEASLKTYEPSEEPFDISLVSREVKSQPLQEKKAPGKKPPAGAPAPAPVPAVDAYQKILSSIPEFSGFGRLFKSSEPVELTEAETEYAINVVKHIYSSHVVLQYNCTNTIPEQLLENVTVYVDATDAEEFSEVCSKPLRSLPYDSPGQIFVAFEKPEHVPATGKFSNVLKFIVKEVDTSTGEVDEDGVEDEYQIEDLEIVSADYMLRVAVSNFRNAWENMDPESERVDEYGLGVRESLAEAVSAVISILGMQPCEGTEVVPKNARSHTCLLSGVFIGDAKVLVRLSFGLSGPKEVAMKLAVRSDDPEVSDKIHEIVASG.

HEAT repeat units lie at residues Val65–Ser100, Asp101–Leu138, Arg286–Leu323, Val325–Glu357, and Ser358–Leu395. The segment at Gln592–Ala612 is disordered. A compositionally biased stretch (pro residues) spans Lys602–Ala612.

This sequence belongs to the COPG family. In terms of assembly, oligomeric complex that consists of at least the alpha, beta, beta', gamma, delta, epsilon and zeta subunits.

It is found in the cytoplasm. The protein localises to the golgi apparatus membrane. The protein resides in the cytoplasmic vesicle. Its subcellular location is the COPI-coated vesicle membrane. In terms of biological role, the coatomer is a cytosolic protein complex that binds to dilysine motifs and reversibly associates with Golgi non-clathrin-coated vesicles, which further mediate biosynthetic protein transport from the ER, via the Golgi up to the trans Golgi network. Coatomer complex is required for budding from Golgi membranes, and is essential for the retrograde Golgi-to-ER transport of dilysine-tagged proteins. In Oryza sativa subsp. japonica (Rice), this protein is Coatomer subunit gamma-1.